A 305-amino-acid polypeptide reads, in one-letter code: Ribonuclease BN (305 aa).

7 residues coordinate Zn(2+): His-64, His-66, Asp-68, His-69, His-141, Asp-212, and His-270. The active-site Proton acceptor is Asp-68.

This sequence belongs to the RNase Z family. RNase BN subfamily. As to quaternary structure, homodimer. The cofactor is Zn(2+).

Functionally, zinc phosphodiesterase, which has both exoribonuclease and endoribonuclease activities. The sequence is that of Ribonuclease BN from Escherichia coli O157:H7.